A 444-amino-acid polypeptide reads, in one-letter code: Phosphoglucosamine mutase (444 aa).

Ser-101 (phosphoserine intermediate) is an active-site residue. Positions 101, 239, 241, and 243 each coordinate Mg(2+). Ser-101 carries the post-translational modification Phosphoserine.

This sequence belongs to the phosphohexose mutase family. The cofactor is Mg(2+). Activated by phosphorylation.

The enzyme catalyses alpha-D-glucosamine 1-phosphate = D-glucosamine 6-phosphate. Its function is as follows. Catalyzes the conversion of glucosamine-6-phosphate to glucosamine-1-phosphate. The sequence is that of Phosphoglucosamine mutase from Alcanivorax borkumensis (strain ATCC 700651 / DSM 11573 / NCIMB 13689 / SK2).